The following is a 126-amino-acid chain: Methylglyoxal synthase (126 aa).

One can recognise an MGS-like domain in the interval 1 to 126 (MEKKIALIAH…LIKGFEGLNT (126 aa)). Residues histidine 10, lysine 14, 36–39 (TGTT), and 56–57 (SG) each bind substrate. The Proton donor/acceptor role is filled by aspartate 62. Histidine 89 contributes to the substrate binding site.

The protein belongs to the methylglyoxal synthase family.

It carries out the reaction dihydroxyacetone phosphate = methylglyoxal + phosphate. Functionally, catalyzes the formation of methylglyoxal from dihydroxyacetone phosphate. The protein is Methylglyoxal synthase of Borrelia garinii subsp. bavariensis (strain ATCC BAA-2496 / DSM 23469 / PBi) (Borreliella bavariensis).